Consider the following 927-residue polypeptide: Nuclear factor of activated T-cells, cytoplasmic 2 (927 aa).

The segment at Met-1–Asp-29 is disordered. Ser-23, Ser-53, Ser-54, Ser-56, Ser-99, Ser-107, and Ser-110 each carry phosphoserine. A calcineurin-binding region spans residues Pro-111–Thr-116. The interval His-119–Asp-201 is transactivation domain A (TAD-A). Residues Ser-136, Ser-150, Ser-170, Ser-173, Ser-174, Ser-176, Ser-177, Ser-179, and Ser-182 each carry the phosphoserine modification. Residues Tyr-163–Ser-177 are required for cytoplasmic retention of the phosphorylated form. A run of 2 repeats spans residues Ser-186–Asp-202 and Ser-215–Asp-231. The segment at Ser-186–Ile-292 is 3 X approximate SP repeats. 2 disordered regions span residues Leu-203–Thr-299 and Ser-322–Ala-341. Residues Ser-215, Ser-219, Ser-223, Ser-238, and Ser-245 each carry the phosphoserine modification. A compositionally biased stretch (polar residues) spans Pro-216–Thr-226. Positions Lys-253 to Arg-255 match the Nuclear localization signal motif. A phosphoserine mark is found at Ser-257, Ser-270, Ser-276, Ser-278, Ser-282, Ser-328, and Ser-365. Residues Pro-267 to Pro-277 show a composition bias toward low complexity. The 3; approximate repeat unit spans residues Ser-274 to Asp-290. Residues Ala-394 to Ala-576 enclose the RHD domain. A DNA-binding region spans residues Arg-423–Gly-430. Ser-757, Ser-759, and Ser-761 each carry phosphoserine. 2 disordered regions span residues Ala-790–Ser-812 and Phe-841–Asp-903. Positions Gly-798–Ser-812 are enriched in polar residues. Ser-860 bears the Phosphoserine mark.

Member of the multicomponent NFATC transcription complex that consists of at least two components, a pre-existing cytoplasmic component NFATC2 and an inducible nuclear component NFATC1. Other members such as NFATC4, NFATC3 or members of the activating protein-1 family, MAF, GATA4 and Cbp/p300 can also bind the complex. The phosphorylated form specifically interacts with XPO1; which mediates nuclear export. NFATC proteins bind to DNA as monomers. Interacts with NFATC2IP. Interacts with FOXP3. Interacts with TBX21 ('Thr-302' phosphorylated form). Interacts with KAT2A. Interacts with HOMER2 and HOMER3; this interaction competes with calcineurin/PPP3CA-binding and hence prevents NFATC2 dephosphorylation and activation. Interacts with protein phosphatase PPP3CA/calcineurin A. Interacts with AKAP5 (via leucine zipper domain); this is required for NFATC2/NFAT1 recruitment to CRAC channels. In resting cells, phosphorylated by NFATC-kinase on at least 18 sites in the 99-365 region. Upon cell stimulation, all these sites except Ser-245 are dephosphorylated by calcineurin. Dephosphorylation induces a conformational change that simultaneously exposes an NLS and masks an NES, which results in nuclear localization. Simultaneously, one site among Ser-53; Ser-54 and Ser-56 is phosphorylated; which is required for full transcriptional activity. Post-translationally, ubiquitinated in endothelial cells by RNF213 downstream of the non-canonical Wnt signaling pathway, leading to its degradation by the proteasome. Expressed in spleen, heart, testis, brain, placenta, muscle and pancreas. Expressed in the thymus. Expressed in the lung. Expressed in cartilage.

The protein localises to the cytoplasm. Its subcellular location is the nucleus. In terms of biological role, plays a role in the inducible expression of cytokine genes in T cells, especially in the induction of the IL-2, IL-3, IL-4, TNF-alpha or GM-CSF. Promotes invasive migration through the activation of GPC6 expression and WNT5A signaling pathway. Is involved in the negative regulation of chondrogenesis. Recruited by AKAP5 to ORAI1 pore-forming subunit of CRAC channels in Ca(2+) signaling microdomains where store-operated Ca(2+) influx is coupled to calmodulin and calcineurin signaling and activation of NFAT-dependent transcriptional responses. This Mus musculus (Mouse) protein is Nuclear factor of activated T-cells, cytoplasmic 2 (Nfatc2).